The primary structure comprises 405 residues: Tryptophan synthase beta chain (405 aa).

Position 98 is an N6-(pyridoxal phosphate)lysine (Lys-98).

The protein belongs to the TrpB family. As to quaternary structure, tetramer of two alpha and two beta chains. Requires pyridoxal 5'-phosphate as cofactor.

It catalyses the reaction (1S,2R)-1-C-(indol-3-yl)glycerol 3-phosphate + L-serine = D-glyceraldehyde 3-phosphate + L-tryptophan + H2O. The protein operates within amino-acid biosynthesis; L-tryptophan biosynthesis; L-tryptophan from chorismate: step 5/5. In terms of biological role, the beta subunit is responsible for the synthesis of L-tryptophan from indole and L-serine. This chain is Tryptophan synthase beta chain, found in Xanthomonas oryzae pv. oryzae (strain PXO99A).